Here is a 103-residue protein sequence, read N- to C-terminus: uncharacterized protein (103 aa).

The next 2 helical transmembrane spans lie at 13–33 and 77–97; these read LLPF…YCIL and FSIY…PYLF.

It localises to the endoplasmic reticulum membrane. This is an uncharacterized protein from Schizosaccharomyces pombe (strain 972 / ATCC 24843) (Fission yeast).